The following is a 132-amino-acid chain: Large ribosomal subunit protein bL12 (132 aa).

This sequence belongs to the bacterial ribosomal protein bL12 family. In terms of assembly, homodimer. Part of the ribosomal stalk of the 50S ribosomal subunit. Forms a multimeric L10(L12)X complex, where L10 forms an elongated spine to which 2 to 4 L12 dimers bind in a sequential fashion. Binds GTP-bound translation factors.

Its function is as follows. Forms part of the ribosomal stalk which helps the ribosome interact with GTP-bound translation factors. Is thus essential for accurate translation. The protein is Large ribosomal subunit protein bL12 of Ehrlichia canis (strain Jake).